A 209-amino-acid polypeptide reads, in one-letter code: Mitochondrial import inner membrane translocase subunit Tim23 (209 aa).

3 consecutive transmembrane segments (helical) span residues Phe-73–Met-93, Ala-125–Ile-145, and Gly-172–Tyr-194.

It belongs to the Tim17/Tim22/Tim23 family. Component of the TIM23 complex at least composed of TIMM23, TIMM17 (TIMM17A or TIMM17B) and TIMM50; within this complex, directly interacts with TIMM50. The complex interacts with the TIMM44 component of the PAM complex and with DNAJC15. Upon mitochondrial depolarization, interacts with PINK1; the interaction is required for PINK1 accumulation at the outer mitochondrial membrane, kinase activation by autophosphorylation and PRKN recruitement to mitochondria.

The protein localises to the mitochondrion inner membrane. Essential component of the TIM23 complex, a complex that mediates the translocation of transit peptide-containing proteins across the mitochondrial inner membrane. Has a role in the activation of stress-induced mitophagy by protecting PINK1 from OMA1-mediated degradation and facilitating its accumulation at the outer mitochondrial membrane in response to depolarization. This Pongo abelii (Sumatran orangutan) protein is Mitochondrial import inner membrane translocase subunit Tim23 (TIMM23).